The primary structure comprises 80 residues: Photosystem II extrinsic protein V (80 aa).

Met47 provides a ligand contact to heme.

The protein belongs to the cytochrome c family. PsbV subfamily. As to quaternary structure, PSII is composed of 1 copy each of membrane proteins PsbA, PsbB, PsbC, PsbD, PsbE, PsbF, PsbH, PsbI, PsbJ, PsbK, PsbL, PsbM, PsbT, PsbY, PsbZ, Psb30/Ycf12, at least 3 peripheral proteins of the oxygen-evolving complex and a large number of cofactors. It forms dimeric complexes. It depends on heme as a cofactor.

It is found in the plastid. It localises to the chloroplast thylakoid membrane. One of the extrinsic, lumenal subunits of photosystem II (PSII). PSII is a light-driven water plastoquinone oxidoreductase, using light energy to abstract electrons from H(2)O, generating a proton gradient subsequently used for ATP formation. The extrinsic proteins stabilize the structure of photosystem II oxygen-evolving complex (OEC), the ion environment of oxygen evolution and protect the OEC against heat-induced inactivation. This chain is Photosystem II extrinsic protein V, found in Thalassiosira weissflogii (Marine diatom).